Consider the following 239-residue polypeptide: Biosynthetic peptidoglycan transglycosylase (239 aa).

Residues 29–49 form a helical membrane-spanning segment; that stretch reads GMFGLGALMLVWIVAYAVVPV.

The protein belongs to the glycosyltransferase 51 family.

The protein localises to the cell inner membrane. It catalyses the reaction [GlcNAc-(1-&gt;4)-Mur2Ac(oyl-L-Ala-gamma-D-Glu-L-Lys-D-Ala-D-Ala)](n)-di-trans,octa-cis-undecaprenyl diphosphate + beta-D-GlcNAc-(1-&gt;4)-Mur2Ac(oyl-L-Ala-gamma-D-Glu-L-Lys-D-Ala-D-Ala)-di-trans,octa-cis-undecaprenyl diphosphate = [GlcNAc-(1-&gt;4)-Mur2Ac(oyl-L-Ala-gamma-D-Glu-L-Lys-D-Ala-D-Ala)](n+1)-di-trans,octa-cis-undecaprenyl diphosphate + di-trans,octa-cis-undecaprenyl diphosphate + H(+). Its pathway is cell wall biogenesis; peptidoglycan biosynthesis. Peptidoglycan polymerase that catalyzes glycan chain elongation from lipid-linked precursors. The polypeptide is Biosynthetic peptidoglycan transglycosylase (Jannaschia sp. (strain CCS1)).